A 107-amino-acid chain; its full sequence is MTKSELVAQLASRFPQLVLKDADFAVKTMLDAMSDALAKGHRIEIRGFGSFGLNRRPARVGRNPKSGEKVQVPEKFVPHFKPGKELRERVDGRAGEPLKADDPDDER.

The interval 76–107 is disordered; the sequence is FVPHFKPGKELRERVDGRAGEPLKADDPDDER. Residues 82-101 are compositionally biased toward basic and acidic residues; sequence PGKELRERVDGRAGEPLKAD.

This sequence belongs to the bacterial histone-like protein family. In terms of assembly, heterodimer of an alpha and a beta chain.

This protein is one of the two subunits of integration host factor, a specific DNA-binding protein that functions in genetic recombination as well as in transcriptional and translational control. In Burkholderia cenocepacia (strain ATCC BAA-245 / DSM 16553 / LMG 16656 / NCTC 13227 / J2315 / CF5610) (Burkholderia cepacia (strain J2315)), this protein is Integration host factor subunit beta.